A 194-amino-acid chain; its full sequence is uncharacterized protein (194 aa).

The tract at residues Gly62–Tyr93 is disordered.

In terms of tissue distribution, expressed most abundantly in the brain at protein level. Present in cortex, cerebellum and midbrain. Found in neurons. Elevated expressions detected in Alzheimer brain samples. Also expressed in testis.

It localises to the cytoplasm. This is an uncharacterized protein from Homo sapiens (Human).